A 535-amino-acid chain; its full sequence is ABC1 family protein C10F6.14c (535 aa).

This sequence belongs to the protein kinase superfamily. ADCK protein kinase family.

This is ABC1 family protein C10F6.14c from Schizosaccharomyces pombe (strain 972 / ATCC 24843) (Fission yeast).